Consider the following 191-residue polypeptide: Lipopolysaccharide export system protein LptC (191 aa).

Residues 7–25 (WVIIVLSLAVLVMIGINMA) form a helical membrane-spanning segment.

Belongs to the LptC family. Component of the lipopolysaccharide transport and assembly complex. Interacts with LptA and the LptBFG transporter complex.

It localises to the cell inner membrane. Involved in the assembly of lipopolysaccharide (LPS). Required for the translocation of LPS from the inner membrane to the outer membrane. Facilitates the transfer of LPS from the inner membrane to the periplasmic protein LptA. Could be a docking site for LptA. The chain is Lipopolysaccharide export system protein LptC from Escherichia coli O157:H7.